A 602-amino-acid polypeptide reads, in one-letter code: Auxin response factor 18 (602 aa).

Positions 128–230 (FVKILTASDT…DLRVGVRRLA (103 aa)) form a DNA-binding region, TF-B3. Residues 359–396 (TSPISTPAQQPQSKCKRSRPIEPSVKTPAPPSFLYSLP) are disordered. The span at 360–371 (SPISTPAQQPQS) shows a compositional bias: polar residues. Positions 489-581 (RSRTKVQMQG…EVKKMTTKLK (93 aa)) constitute a PB1 domain.

This sequence belongs to the ARF family. As to quaternary structure, homodimers and heterodimers.

The protein localises to the nucleus. Auxin response factors (ARFs) are transcriptional factors that bind specifically to the DNA sequence 5'-TGTCTC-3' found in the auxin-responsive promoter elements (AuxREs). Could act as transcriptional activator or repressor. Formation of heterodimers with Aux/IAA proteins may alter their ability to modulate early auxin response genes expression. This Arabidopsis thaliana (Mouse-ear cress) protein is Auxin response factor 18 (ARF18).